The primary structure comprises 262 residues: Protein BREAKING OF ASYMMETRY IN THE STOMATAL LINEAGE (262 aa).

2 disordered regions span residues 32–107 and 129–222; these read DEDG…QPPV and KEGK…GRGS. Residues 37–47 are compositionally biased toward low complexity; sequence NNNGNTTNNNN. 2 consecutive short sequence motifs (nuclear localization signal) follow at residues 50–57 and 61–68; these read FKRIKRKI and KKKRSERK. The segment covering 51-66 has biased composition (basic residues); sequence KRIKRKIKSTKKKRSE. Residues serine 72, serine 85, serine 86, and serine 87 each carry the phosphoserine; by ASK7 modification. The segment covering 84–95 has biased composition (low complexity); that stretch reads RSSSVSPTTSGS. Serine 89 carries the post-translational modification Phosphoserine; by ASK7 and MPK6. Phosphothreonine; by ASK7 is present on threonine 91. A compositionally biased stretch (basic and acidic residues) spans 129 to 146; the sequence is KEGKQEKKETESSSEKSP. Residues serine 145 and serine 168 each carry the phosphoserine; by MPK6 modification. Residues 179-189 show a composition bias toward polar residues; the sequence is NDNTSCQGTKD. A compositionally biased stretch (basic and acidic residues) spans 190–200; that stretch reads VSSDVTERTKE. Residues 222–262 form a required for polarization at the cell cortex region; that stretch reads SFAFPILGVEWMGSPAKMPESDDLSPKKQKPVALGFQCCRF. Positions 223–226 match the FxFP, required for cortical polarity formation motif; that stretch reads FAFP. Serine 235 and serine 246 each carry phosphoserine; by MPK6.

As to quaternary structure, component of a complex made of POLAR, BASL, ASK7/BIN2 and ASK3/SK12. Interacts with POLAR, ASK7/BIN2 and ASK3/SK12. Binds to YDA when phosphorylated. Interacts with MPK6, MPK3 and MKK5. In terms of processing, cortical localization of BASL requires phosphorylation mediated by MPK3 and MPK6. Phosphorylation promotes YDA binding. Phosphorylation status modulates subcellular mobility. Mostly expressed in stomatal lineage cells including asymmetrically dividing meristemoid mother cells (MMCs) and meristemoids, and, at lower levels, in their sisters. Also present in vasculature. Expressed at low levels in the epidermal pavement cells.

The protein localises to the cytoplasm. Its subcellular location is the nucleus. It localises to the cell cortex. It is found in the cell membrane. Its function is as follows. Regulates asymmetric cell division (ACD), especially in stomatal-lineage cells, probably by modulating accumulation and subcellular polarization of POLAR and SPCH. Mediates an attenuation of MAPK signaling upon polarization of POLAR and ASK7/BIN2 in stomatal lineage ground cells (SLGCs) undergoing ACD, and relieves BIN2 inhibition of SPCH in the nucleus. When phosphorylated, functions as a scaffold and recruits the MAPKKK YODA, MPK3 and MPK6 to spatially reorganize the MAPK signaling pathway at the cortex of cells undergoing ACD. Cortical polarization leads to elevated nuclear MPK6 signaling and lowered SPCH abundance in one of the two daughter cells, thus differentiating the two daughter cells after ACD. This is Protein BREAKING OF ASYMMETRY IN THE STOMATAL LINEAGE from Arabidopsis thaliana (Mouse-ear cress).